The sequence spans 102 residues: UPF0473 protein SAS1551 (102 aa).

The protein belongs to the UPF0473 family.

This is UPF0473 protein SAS1551 from Staphylococcus aureus (strain MSSA476).